The chain runs to 302 residues: MSKEIALTLDSRKRLGSTYLKLTKPKVVALMLVTAIVGMSLAPVTDFPWIQASIGLIGIGLMAGSAAAFNHLIDRRIDARMARTHTRPLPSGDTNPLSVAIFAVAIGVVGFVLLYAWVNELTAWMTFLSLLGYAVVYTMYLKRATPQNIVIAGIAGAMPPLLGWTAVTGELHGNAWLLVMIIFIWTPPHFWALAIHRVEDYRKVDIPMLPVTHGIEYTKTSILLYTVLLTLVCVMPVLVGMVGFIYLFSALLLNAGFIYHAWKLKFAPEPNSAIETFKFSIYHLLALFVALLADHYIGMVLQ.

The next 8 helical transmembrane spans lie at 27–47 (VVALMLVTAIVGMSLAPVTDF), 49–69 (WIQASIGLIGIGLMAGSAAAF), 98–118 (SVAIFAVAIGVVGFVLLYAWV), 121–141 (LTAWMTFLSLLGYAVVYTMYL), 149–169 (IVIAGIAGAMPPLLGWTAVTG), 175–195 (AWLLVMIIFIWTPPHFWALAI), 228–248 (LLTLVCVMPVLVGMVGFIYLF), and 281–301 (IYHLLALFVALLADHYIGMVL).

Belongs to the UbiA prenyltransferase family. Protoheme IX farnesyltransferase subfamily.

The protein resides in the cell inner membrane. It catalyses the reaction heme b + (2E,6E)-farnesyl diphosphate + H2O = Fe(II)-heme o + diphosphate. The protein operates within porphyrin-containing compound metabolism; heme O biosynthesis; heme O from protoheme: step 1/1. In terms of biological role, converts heme B (protoheme IX) to heme O by substitution of the vinyl group on carbon 2 of heme B porphyrin ring with a hydroxyethyl farnesyl side group. This Vibrio parahaemolyticus serotype O3:K6 (strain RIMD 2210633) protein is Protoheme IX farnesyltransferase 1.